The sequence spans 475 residues: Adenosylhomocysteinase (475 aa).

The substrate site is built by Thr-61, Asp-140, and Glu-200. 201–203 (TTT) provides a ligand contact to NAD(+). Substrate is bound by residues Lys-230 and Asp-234. NAD(+) is bound by residues Asn-235, 264-269 (GYGDVG), Glu-287, Asn-322, 343-345 (IGH), and Asn-388.

Belongs to the adenosylhomocysteinase family. The cofactor is NAD(+).

The protein localises to the cytoplasm. The catalysed reaction is S-adenosyl-L-homocysteine + H2O = L-homocysteine + adenosine. Its pathway is amino-acid biosynthesis; L-homocysteine biosynthesis; L-homocysteine from S-adenosyl-L-homocysteine: step 1/1. May play a key role in the regulation of the intracellular concentration of adenosylhomocysteine. This is Adenosylhomocysteinase from Paracidovorax citrulli (strain AAC00-1) (Acidovorax citrulli).